The sequence spans 515 residues: Bifunctional purine biosynthesis protein PurH (515 aa).

One can recognise an MGS-like domain in the interval 1–145 (MTKRALISVS…KNHASVTVVV (145 aa)).

The protein belongs to the PurH family.

It catalyses the reaction (6R)-10-formyltetrahydrofolate + 5-amino-1-(5-phospho-beta-D-ribosyl)imidazole-4-carboxamide = 5-formamido-1-(5-phospho-D-ribosyl)imidazole-4-carboxamide + (6S)-5,6,7,8-tetrahydrofolate. The enzyme catalyses IMP + H2O = 5-formamido-1-(5-phospho-D-ribosyl)imidazole-4-carboxamide. The protein operates within purine metabolism; IMP biosynthesis via de novo pathway; 5-formamido-1-(5-phospho-D-ribosyl)imidazole-4-carboxamide from 5-amino-1-(5-phospho-D-ribosyl)imidazole-4-carboxamide (10-formyl THF route): step 1/1. Its pathway is purine metabolism; IMP biosynthesis via de novo pathway; IMP from 5-formamido-1-(5-phospho-D-ribosyl)imidazole-4-carboxamide: step 1/1. The protein is Bifunctional purine biosynthesis protein PurH of Streptococcus suis (strain 98HAH33).